The chain runs to 518 residues: Membrane-bound lytic murein transglycosylase F (518 aa).

A signal peptide spans 1 to 21; sequence MKKLKINYLFIGILALLLAVA. The non-LT domain stretch occupies residues 22 to 269; that stretch reads LWPSIPWFGK…RIEEKYLGHG (248 aa). Residues 270–518 form an LT domain region; that stretch reads DDFDYVDTRT…SRKGSEEKQN (249 aa). E314 is an active-site residue.

This sequence in the N-terminal section; belongs to the bacterial solute-binding protein 3 family. The protein in the C-terminal section; belongs to the transglycosylase Slt family.

Its subcellular location is the cell outer membrane. The enzyme catalyses Exolytic cleavage of the (1-&gt;4)-beta-glycosidic linkage between N-acetylmuramic acid (MurNAc) and N-acetylglucosamine (GlcNAc) residues in peptidoglycan, from either the reducing or the non-reducing ends of the peptidoglycan chains, with concomitant formation of a 1,6-anhydrobond in the MurNAc residue.. Its function is as follows. Murein-degrading enzyme that degrades murein glycan strands and insoluble, high-molecular weight murein sacculi, with the concomitant formation of a 1,6-anhydromuramoyl product. Lytic transglycosylases (LTs) play an integral role in the metabolism of the peptidoglycan (PG) sacculus. Their lytic action creates space within the PG sacculus to allow for its expansion as well as for the insertion of various structures such as secretion systems and flagella. This is Membrane-bound lytic murein transglycosylase F from Shigella sonnei (strain Ss046).